The following is a 518-amino-acid chain: Sugar transport protein MST3 (518 aa).

At 1 to 18 the chain is on the cytoplasmic side; sequence MAGGAVVSTGAGKDYPGK. Residues 19-39 form a helical membrane-spanning segment; that stretch reads LTLFVFFTCVVAATGGLIFGY. The Extracellular portion of the chain corresponds to 40–80; that stretch reads DIGISGGVTSMDPFLRKFFPEVYRKKQMADKNNQYCKYDNQ. A helical membrane pass occupies residues 81–101; the sequence is LLQTFTSSLYLAALVSSFFAA. The Cytoplasmic portion of the chain corresponds to 102 to 117; sequence TVTRVLGRKWSMFAGG. A helical transmembrane segment spans residues 118–138; it reads LTFLIGAALNGAAENVAMLIV. The Extracellular portion of the chain corresponds to 139-140; it reads GR. A helical transmembrane segment spans residues 141–161; that stretch reads ILLGVGVGFANQSVPVYLSEM. The Cytoplasmic segment spans residues 162–167; that stretch reads APARLR. A helical membrane pass occupies residues 168–188; sequence GMLNIGFQLMITIGILAAELI. Residues 189-202 are Extracellular-facing; the sequence is NYGTAKIKAGWGWR. The helical transmembrane segment at 203 to 223 threads the bilayer; that stretch reads VSLALAAVPAAIITLGSLFLP. Residues 224–290 are Cytoplasmic-facing; that stretch reads DTPNSLIDRG…YRAQLTMAIC (67 aa). Residues 291-311 traverse the membrane as a helical segment; the sequence is IPFFQQLTGINVIMFYAPVLF. Over 312 to 322 the chain is Extracellular; it reads DTLGFKSDASL. A helical transmembrane segment spans residues 323–343; it reads MSAVITGLVNVFATLVSIFTV. At 344–351 the chain is on the cytoplasmic side; the sequence is DRLGRRKL. A helical membrane pass occupies residues 352–372; it reads FLQGGAQMVVCQVVVGTLIAV. At 373–387 the chain is on the extracellular side; it reads KFGTSGIGDIPKGYA. A helical membrane pass occupies residues 388-408; sequence AVVVLFICMYVAGFAWSWGPL. Topologically, residues 409-427 are cytoplasmic; the sequence is GWLVPSEIFPLEIRPAGQS. Residues 428 to 448 form a helical membrane-spanning segment; it reads INVSVNMLFTFVIAQAFLTML. The Extracellular segment spans residues 449 to 452; sequence CHMK. A helical membrane pass occupies residues 453–473; sequence FGLFYFFAGWVVIMTVFIALF. Residues 474 to 518 lie on the Cytoplasmic side of the membrane; sequence LPETKNVPIEEMVLVWKSHWFWRRFIGDHDVHVGANHVSNNKLQP.

It belongs to the major facilitator superfamily. Sugar transporter (TC 2.A.1.1) family. In terms of tissue distribution, highly expressed in roots. Expressed in xylem and sclerenchyma cells of roots. Expressed at low levels in leaves.

It is found in the membrane. Functionally, mediates active uptake of hexoses by sugar:proton symport. Can transport glucose, xylose and 3-O-methylglucose. May be involved in the accumulation of monosaccharides required for cell wall synthesis during root development. In Oryza sativa subsp. japonica (Rice), this protein is Sugar transport protein MST3.